Consider the following 522-residue polypeptide: Glucose-1-phosphate adenylyltransferase large subunit, chloroplastic/amyloplastic (522 aa).

A chloroplast-targeting transit peptide spans 1–62 (MSSMQFSSVL…RGPAATGAQC (62 aa)). The segment covering 28–42 (SERLKVGDSSSIRHE) has biased composition (basic and acidic residues). Positions 28–54 (SERLKVGDSSSIRHERASRRMCNGGRG) are disordered.

It belongs to the bacterial/plant glucose-1-phosphate adenylyltransferase family. Heterotetramer. In terms of tissue distribution, abundantly expressed in the whole grains, a slightly less abundant expression is seen in leaves, while a low level expression is seen in the roots. A greater expression is seen in the endosperm than in the embryo and pericarp layers.

Its subcellular location is the plastid. It is found in the chloroplast. It localises to the amyloplast. The catalysed reaction is alpha-D-glucose 1-phosphate + ATP + H(+) = ADP-alpha-D-glucose + diphosphate. It participates in glycan biosynthesis; starch biosynthesis. Its activity is regulated as follows. Insensitive to 3'phosphoglycerate and orthophosphate. In terms of biological role, this protein plays a role in synthesis of starch. It catalyzes the synthesis of the activated glycosyl donor, ADP-glucose from Glc-1-P and ATP. In Triticum aestivum (Wheat), this protein is Glucose-1-phosphate adenylyltransferase large subunit, chloroplastic/amyloplastic (AGP-L).